Consider the following 249-residue polypeptide: Chitooligosaccharide deacetylase (249 aa).

Histidine 61 and histidine 125 together coordinate Mg(2+).

Belongs to the YdjC deacetylase family. ChbG subfamily. In terms of assembly, homodimer. Requires Mg(2+) as cofactor.

The protein localises to the cytoplasm. The enzyme catalyses N,N'-diacetylchitobiose + H2O = N-acetyl-beta-D-glucosaminyl-(1-&gt;4)-D-glucosamine + acetate. It catalyses the reaction diacetylchitobiose-6'-phosphate + H2O = N'-monoacetylchitobiose-6'-phosphate + acetate. It participates in glycan degradation; chitin degradation. Its function is as follows. Involved in the degradation of chitin. ChbG is essential for growth on the acetylated chitooligosaccharides chitobiose and chitotriose but is dispensable for growth on cellobiose and chitosan dimer, the deacetylated form of chitobiose. Deacetylation of chitobiose-6-P and chitotriose-6-P is necessary for both the activation of the chb promoter by the regulatory protein ChbR and the hydrolysis of phosphorylated beta-glucosides by the phospho-beta-glucosidase ChbF. Catalyzes the removal of only one acetyl group from chitobiose-6-P to yield monoacetylchitobiose-6-P, the inducer of ChbR and the substrate of ChbF. This chain is Chitooligosaccharide deacetylase, found in Escherichia coli O17:K52:H18 (strain UMN026 / ExPEC).